A 436-amino-acid polypeptide reads, in one-letter code: GTPase Der (436 aa).

EngA-type G domains lie at 4-167 and 175-351; these read PTVA…PNEI and IKFS…HAQN. GTP contacts are provided by residues 10 to 17, 57 to 61, 119 to 122, 181 to 188, 229 to 233, and 294 to 297; these read GRPNVGKS, DTGGI, NKVD, DTAGM, and NKWD. One can recognise a KH-like domain in the interval 352–436; sequence LRISSSVLND…PIHLIARKRK (85 aa).

Belongs to the TRAFAC class TrmE-Era-EngA-EngB-Septin-like GTPase superfamily. EngA (Der) GTPase family. Associates with the 50S ribosomal subunit.

Its function is as follows. GTPase that plays an essential role in the late steps of ribosome biogenesis. This Lactococcus lactis subsp. cremoris (strain SK11) protein is GTPase Der.